We begin with the raw amino-acid sequence, 122 residues long: Small ribosomal subunit protein uS13 (122 aa).

The segment at 93–122 (RRGLPVRGQRTKTNARTRKGPKKTIAGKKK) is disordered.

Belongs to the universal ribosomal protein uS13 family. As to quaternary structure, part of the 30S ribosomal subunit. Forms a loose heterodimer with protein S19. Forms two bridges to the 50S subunit in the 70S ribosome.

Located at the top of the head of the 30S subunit, it contacts several helices of the 16S rRNA. In the 70S ribosome it contacts the 23S rRNA (bridge B1a) and protein L5 of the 50S subunit (bridge B1b), connecting the 2 subunits; these bridges are implicated in subunit movement. Contacts the tRNAs in the A and P-sites. The chain is Small ribosomal subunit protein uS13 from Corynebacterium efficiens (strain DSM 44549 / YS-314 / AJ 12310 / JCM 11189 / NBRC 100395).